A 1004-amino-acid chain; its full sequence is Glycine dehydrogenase (decarboxylating), mitochondrial (1004 aa).

Lys-738 is subject to N6-(pyridoxal phosphate)lysine.

This sequence belongs to the GcvP family. In terms of assembly, homodimer. Interacts with GCSH. The glycine cleavage system is composed of four proteins: P (GLDC), T (GCST), L (DLD) and H (GCSH). It depends on pyridoxal 5'-phosphate as a cofactor. Liver (at protein level).

It localises to the mitochondrion. It catalyses the reaction N(6)-[(R)-lipoyl]-L-lysyl-[glycine-cleavage complex H protein] + glycine + H(+) = N(6)-[(R)-S(8)-aminomethyldihydrolipoyl]-L-lysyl-[glycine-cleavage complex H protein] + CO2. With respect to regulation, stimulated by lipoic acid. Inhibited in presence of methylamine. Its function is as follows. The glycine cleavage system catalyzes the degradation of glycine. The P protein (GLDC) binds the alpha-amino group of glycine through its pyridoxal phosphate cofactor; CO(2) is released and the remaining methylamine moiety is then transferred to the lipoamide cofactor of the H protein (GCSH). This is Glycine dehydrogenase (decarboxylating), mitochondrial from Gallus gallus (Chicken).